Reading from the N-terminus, the 509-residue chain is Lysine--tRNA ligase (509 aa).

Residues Glu418 and Glu425 each coordinate Mg(2+).

Belongs to the class-II aminoacyl-tRNA synthetase family. Homodimer. Mg(2+) is required as a cofactor.

Its subcellular location is the cytoplasm. The catalysed reaction is tRNA(Lys) + L-lysine + ATP = L-lysyl-tRNA(Lys) + AMP + diphosphate. The polypeptide is Lysine--tRNA ligase (lysS) (Acinetobacter baylyi (strain ATCC 33305 / BD413 / ADP1)).